The sequence spans 1054 residues: Putative disease resistance RPP13-like protein 1 (1054 aa).

2 leucine-zipper regions span residues 9–20 (LAAFLQALFQTL) and 39–53 (LERL…TAVL). Positions 117–147 (DFLDGNSEHLETRLEKVTIRLERLASQRNIL) form a coiled coil. One can recognise an NB-ARC domain in the interval 152-462 (LTAMIPKQRL…AEGFLQQTRS (311 aa)). ATP is bound at residue 203-210 (GIGGVGKT). LRR repeat units follow at residues 579–600 (RLRV…FFKN), 603–624 (HARF…LCYM), 626–648 (NLQT…ISNL), 650–672 (NLRY…GRLK), and 676–697 (TLTT…GGLH). Residues 1018 to 1054 (PQYHHPQFHLPRSNVSGSPKSHGSHRSYDSRSSSRYD) form a disordered region. Residues 1043 to 1054 (RSYDSRSSSRYD) show a composition bias toward basic and acidic residues.

This sequence belongs to the disease resistance NB-LRR family. RPP13 subfamily.

In terms of biological role, potential disease resistance protein. This is Putative disease resistance RPP13-like protein 1 (RPPL1) from Arabidopsis thaliana (Mouse-ear cress).